A 98-amino-acid chain; its full sequence is NADH-ubiquinone oxidoreductase chain 4L (98 aa).

3 consecutive transmembrane segments (helical) span residues 1 to 21 (MPII…GMLV), 29 to 49 (SLLC…LMAL), and 61 to 81 (IALL…LVSI).

The protein belongs to the complex I subunit 4L family. Core subunit of respiratory chain NADH dehydrogenase (Complex I) which is composed of 45 different subunits.

It is found in the mitochondrion inner membrane. It catalyses the reaction a ubiquinone + NADH + 5 H(+)(in) = a ubiquinol + NAD(+) + 4 H(+)(out). Functionally, core subunit of the mitochondrial membrane respiratory chain NADH dehydrogenase (Complex I) which catalyzes electron transfer from NADH through the respiratory chain, using ubiquinone as an electron acceptor. Part of the enzyme membrane arm which is embedded in the lipid bilayer and involved in proton translocation. In Piliocolobus badius (Western red colobus), this protein is NADH-ubiquinone oxidoreductase chain 4L (MT-ND4L).